Reading from the N-terminus, the 148-residue chain is 3-dehydroquinate dehydratase (148 aa).

Catalysis depends on Y23, which acts as the Proton acceptor. Substrate-binding residues include N75, H81, and D88. Residue H101 is the Proton donor of the active site. Substrate-binding positions include 102–103 and R112; that span reads LS.

It belongs to the type-II 3-dehydroquinase family. Homododecamer.

The catalysed reaction is 3-dehydroquinate = 3-dehydroshikimate + H2O. Its pathway is metabolic intermediate biosynthesis; chorismate biosynthesis; chorismate from D-erythrose 4-phosphate and phosphoenolpyruvate: step 3/7. In terms of biological role, catalyzes a trans-dehydration via an enolate intermediate. The chain is 3-dehydroquinate dehydratase from Xanthomonas campestris pv. campestris (strain 8004).